The primary structure comprises 221 residues: Urease accessory protein UreE (221 aa).

The segment at 160 to 194 (VPGTNKTTGDLAEEEQETERHEPHAHAIGEHHHEK) is disordered. Residues 177-194 (TERHEPHAHAIGEHHHEK) are compositionally biased toward basic and acidic residues.

This sequence belongs to the UreE family.

The protein localises to the cytoplasm. Functionally, involved in urease metallocenter assembly. Binds nickel. Probably functions as a nickel donor during metallocenter assembly. This is Urease accessory protein UreE from Bifidobacterium longum subsp. infantis (strain ATCC 15697 / DSM 20088 / JCM 1222 / NCTC 11817 / S12).